A 933-amino-acid chain; its full sequence is Progesterone receptor (933 aa).

A disordered region spans residues 1–48 (MTELKAKGPRAPHVAGGPPSPEVGSPLLCRPAAGPFEGSQTSDTLPEV). The interval 1-164 (MTELKAKGPR…PATQRVLSPL (164 aa)) is AF3; mediates transcriptional activation. The segment at 1–566 (MTELKAKGPR…YSFESLPQKI (566 aa)) is modulating, Pro-Rich. Ser20 bears the Phosphoserine mark. Residues 55–59 (LDGLL) carry the LXXL motif 1 motif. Positions 66–255 (GQDLPDEKTQ…GAAAGGGAAA (190 aa)) are disordered. Phosphoserine is present on Ser81. An LXXL motif 2 motif is present at residues 115 to 119 (LDTLL). Phosphoserine is present on residues Ser130 and Ser162. Positions 165 to 305 (MSRSGGKTGD…LATTMMDFIH (141 aa)) are mediates transcriptional transrepression. The short motif at 183 to 187 (KVLPR) is the Nuclear localization signal element. Phosphoserine occurs at positions 190 and 213. Ser294 is subject to Phosphoserine; by MAPK1. The interval 331-378 (GGAGAASAFAPPQSSPSASSTPVAVGDFPDCAYPPDAEPKDNAYPLYG) is disordered. A compositionally biased stretch (low complexity) spans 335–350 (AASAFAPPQSSPSASS). Ser345 is subject to Phosphoserine; by MAPK. Lys388 participates in a covalent cross-link: Glycyl lysine isopeptide (Lys-Gly) (interchain with G-Cter in SUMO); alternate. A Glycyl lysine isopeptide (Lys-Gly) (interchain with G-Cter in ubiquitin); alternate cross-link involves residue Lys388. Ser400 is subject to Phosphoserine; by CDK2. The disordered stretch occupies residues 415-454 (PDYPLGPPPQLPPRAPPSRPGEAAVTAAPASASVSSASSP). A compositionally biased stretch (pro residues) spans 418 to 433 (PLGPPPQLPPRAPPSR). A compositionally biased stretch (low complexity) spans 437–454 (AAVTAAPASASVSSASSP). The AF1; mediates transcriptional activation stretch occupies residues 456 to 546 (STLECILYKA…VYPPYLNYLR (91 aa)). Lys531 participates in a covalent cross-link: Glycyl lysine isopeptide (Lys-Gly) (interchain with G-Cter in SUMO). NR C4-type zinc fingers lie at residues 567–587 (CLIC…CGSC) and 603–627 (CAGR…LRKC). A DNA-binding region (nuclear receptor) is located at residues 567–639 (CLICGDEASG…AGMVLGGRKF (73 aa)). Ser676 carries the post-translational modification Phosphoserine. The NR LBD domain occupies 679–913 (QDIQLIPPLI…EFPEMMSEVI (235 aa)). The interval 687 to 933 (LIKLLMSIEP…MVKPLLFHKK (247 aa)) is AF2; mediates transcriptional activation.

It belongs to the nuclear hormone receptor family. As to quaternary structure, interacts with SMARD1 and UNC45A. Interacts with CUEDC2; the interaction promotes ubiquitination, decreases sumoylation, and represses transcriptional activity. Interacts with PIAS3; the interaction promotes sumoylation of PR in a hormone-dependent manner, inhibits DNA-binding, and alters nuclear export. Interacts with SP1; the interaction requires ligand-induced phosphorylation on Ser-345 by ERK1/2-MAPK. Interacts with PRMT2. Interacts with NCOA2 and NCOA1. Interacts with KLF9. Interacts with GTF2B. In terms of processing, phosphorylated on multiple serine sites. Several of these sites are hormone-dependent. Phosphorylation on Ser-294 is highly hormone-dependent and modulates ubiquitination and sumoylation on Lys-388. Phosphorylation on Ser-345 also requires induction by hormone. Basal phosphorylation on Ser-81, Ser-162, Ser-190 and Ser-400 is increased in response to progesterone and can be phosphorylated in vitro by the CDK2-A1 complex. Increased levels of phosphorylation on Ser-400 also in the presence of EGF, heregulin, IGF, PMA and FBS. Phosphorylation at this site by CDK2 is ligand-independent, and increases nuclear translocation and transcriptional activity. Phosphorylation at Ser-162 and Ser-294, but not at Ser-190, is impaired during the G(2)/M phase of the cell cycle. Phosphorylation on Ser-345 by ERK1/2 MAPK is required for interaction with SP1. Post-translationally, sumoylation is hormone-dependent and represses transcriptional activity. Sumoylation on all three sites is enhanced by PIAS3. Desumoylated by SENP1. Sumoylation on Lys-388, the main site of sumoylation, is repressed by ubiquitination on the same site, and modulated by phosphorylation at Ser-294. Ubiquitination is hormone-dependent and represses sumoylation on the same site. Promoted by MAPK-mediated phosphorylation on Ser-294. In terms of processing, palmitoylated by ZDHHC7 and ZDHHC21. Palmitoylation is required for plasma membrane targeting and for rapid intracellular signaling via ERK and AKT kinases and cAMP generation.

It is found in the nucleus. It localises to the cytoplasm. Functionally, the steroid hormones and their receptors are involved in the regulation of eukaryotic gene expression and affect cellular proliferation and differentiation in target tissues. Transcriptional activator of several progesteron-dependent promoters in a variety of cell types. Involved in activation of SRC-dependent MAPK signaling on hormone stimulation. The chain is Progesterone receptor (PGR) from Trachypithecus obscurus (Dusky leaf-monkey).